Reading from the N-terminus, the 344-residue chain is uncharacterized protein (344 aa).

5 helical membrane-spanning segments follow: residues Phe-53–Trp-73, Trp-84–Ile-104, Ile-153–Leu-173, Phe-189–Leu-209, and Ile-275–Phe-295.

It belongs to the steroid 5-alpha reductase family.

It is found in the endoplasmic reticulum membrane. This is an uncharacterized protein from Schizosaccharomyces pombe (strain 972 / ATCC 24843) (Fission yeast).